The sequence spans 120 residues: Glycine cleavage system H protein (120 aa).

Residues Val-17–Lys-99 enclose the Lipoyl-binding domain. N6-lipoyllysine is present on Lys-58.

The protein belongs to the GcvH family. The glycine cleavage system is composed of four proteins: P, T, L and H. (R)-lipoate is required as a cofactor.

Its function is as follows. The glycine cleavage system catalyzes the degradation of glycine. The H protein shuttles the methylamine group of glycine from the P protein to the T protein. This is Glycine cleavage system H protein from Rhizobium etli (strain ATCC 51251 / DSM 11541 / JCM 21823 / NBRC 15573 / CFN 42).